Consider the following 689-residue polypeptide: MATSQRKILVTSALPYANGPIHLGHMLEYIQTDIWSRYQKLRGHECHYICADDAHGTPIMLKAQQLGIAPEDMIAQVNKEHQQDFADFNVAFDNYHSTHSEENRLMASDIYLKLRDNGYIKSKSISQLFDPEKSMFLPDRFVKGTCPKCKSPDQYGDNCDSCGATYSPTELINPKSAVSGATPVMKDTEHFFFDLPAFEGMLKEWTRSGALQVEMANKLDEWFEQGLQQWDITRDAPYFGFEIPDAPGKYFYVWLDAPIGYMGSFKNLCAKRPELSFDEFWGKDSTAEVYHFIGKDIVYFHSLFWPAMLHGSGYRQPNSVYAHGYVTVNGAKMSKSKGTFIKARTYLDHLDPEYLRYYYAAKLSSRIDDLDLNLEDFAQRVNSDLVGKLVNLASRTAGFITKRFDGKLAKINDTTLTEAFLAKQDVIADFYESREYGKAMREIMALADIANGFVADAAPWQMVKHDDQQEAAHQVCSNALNLFRILVTYLKPVLPRLAQDVEAFFQLPLTWDALSQDLAGHEIAPFKAMMQRVELDKVNAMVADSKDNLQVTADAPKTAAPEKTAKASSVSSEPLVDDPISETINFDDFAKIDLRIARIVKAEHVADADKLLKLQLDIGGETRQVFAGIKSAYSPEDLEGKLTVMVANLAPRKMRFGMSEGMVLAAGPGGSDLWILEPHEGAQPGMRVK.

Residues 15-25 (PYANGPIHLGH) carry the 'HIGH' region motif. Zn(2+) contacts are provided by Cys146, Cys149, Cys159, and Cys162. The 'KMSKS' region motif lies at 332–336 (KMSKS). Residue Lys335 coordinates ATP. In terms of domain architecture, tRNA-binding spans 588-689 (DFAKIDLRIA…EGAQPGMRVK (102 aa)).

It belongs to the class-I aminoacyl-tRNA synthetase family. MetG type 1 subfamily. Homodimer. Zn(2+) is required as a cofactor.

It localises to the cytoplasm. The catalysed reaction is tRNA(Met) + L-methionine + ATP = L-methionyl-tRNA(Met) + AMP + diphosphate. In terms of biological role, is required not only for elongation of protein synthesis but also for the initiation of all mRNA translation through initiator tRNA(fMet) aminoacylation. The chain is Methionine--tRNA ligase from Shewanella baltica (strain OS223).